A 1580-amino-acid polypeptide reads, in one-letter code: Ras GTPase-activating protein raskol (1580 aa).

Ser164 is modified (phosphoserine). The residue at position 167 (Thr167) is a Phosphothreonine. The disordered stretch occupies residues 197–223 (LKRTKSVTKLERTKRGSGGLRGSRSHE). 2 positions are modified to phosphoserine: Ser221 and Ser224. Positions 233–291 (STIDLSCTGAVGVAPVHQSVLGRRHCFQVRGGPRGERYYSCGSRQERDLWIYSLRKSIA) constitute a PH domain. The C2 domain maps to 282–400 (WIYSLRKSIA…TSRLPCEQWY (119 aa)). Residues 490-700 (GLAGAFLTDV…ARMQQFLEII (211 aa)) enclose the Ras-GAP domain. Disordered regions lie at residues 764-819 (GMGT…QPQH), 857-892 (LLQQ…HQHP), 904-1023 (AGNQ…SYDD), 1112-1218 (ANHH…QQFG), 1284-1313 (LSGG…YGRL), 1334-1443 (VGYG…LGKS), and 1561-1580 (YETQ…QKPQ). Residues 776 to 805 (ATSSTHSIASENQENRNPGSSGSHAGSNSE) show a composition bias toward polar residues. Low complexity-rich tracts occupy residues 806-818 (QLLP…AQPQ), 857-885 (LLQQ…GHQQ), and 926-939 (SSSL…LLHG). The segment covering 940–954 (HQQHAHHPQQLHPHH) has biased composition (basic residues). Over residues 987–1020 (TSTPSSTRSRTLPRNGNPNANGNVGSSNNNQSGS) the composition is skewed to low complexity. Polar residues predominate over residues 1140 to 1150 (SAKSSHCSSGY). Over residues 1151-1169 (QSISTNPSPSQSSSPVESQ) the composition is skewed to low complexity. 2 positions are modified to phosphoserine: Ser1158 and Ser1164. Positions 1186-1206 (PSYQLQPQTGSSRSSAQSNTH) are enriched in polar residues. 3 stretches are compositionally biased toward low complexity: residues 1207-1216 (QQQQQQQQQQ), 1285-1299 (SGGS…ASTS), and 1351-1362 (HQQQQNPMQQQQ). Over residues 1363 to 1372 (QRERDQEHKQ) the composition is skewed to basic and acidic residues. A compositionally biased stretch (low complexity) spans 1374 to 1388 (AGSVAGSVGSATSAA). Over residues 1396-1415 (SARTLSDSSTDTEGHCNQLQ) the composition is skewed to polar residues. Phosphoserine is present on residues Ser1401 and Ser1403. The segment covering 1427–1438 (GGSGGGGAGSEQ) has biased composition (gly residues). A compositionally biased stretch (low complexity) spans 1563–1580 (TQQQQQQHQAPPKTQKPQ).

Its subcellular location is the cytoplasm. The protein localises to the cell membrane. The protein resides in the apical cell membrane. Its function is as follows. GTPase-activating protein, which acts as a negative regulator for some members of the Ras family. Probably decreases their signaling activity by stimulating their intrinsic GTPase activity, thereby lowering the levels of the GTP-bound active form. Functions with DE-cadherin (shg) to promote embryonic border cell (BC) migration and adhesion by regulating the distribution of actin protrusions in BCs. Promotes shg-mediated adhesion at the BC interfaces and likely maintains BC cluster adhesion during BC detachment from the follicular epithelium and subsequent BC migration. Also required for restricting the development of actin-rich protrusions to the front of migrating BC clusters thus ensuring unidirectional BC migration. Possibly functions by suppressing Rac1 signaling in non-leading BCs, thus limiting its activity to leading BCs where it initiates localized actin cytoskeleton remodeling to produce the polarized protrusions. The polypeptide is Ras GTPase-activating protein raskol (Drosophila melanogaster (Fruit fly)).